A 138-amino-acid polypeptide reads, in one-letter code: Large ribosomal subunit protein uL16 (138 aa).

It belongs to the universal ribosomal protein uL16 family. Part of the 50S ribosomal subunit.

In terms of biological role, binds 23S rRNA and is also seen to make contacts with the A and possibly P site tRNAs. The chain is Large ribosomal subunit protein uL16 from Acholeplasma laidlawii (strain PG-8A).